A 389-amino-acid polypeptide reads, in one-letter code: Chalcone synthase 1 (389 aa).

Cys164 is a catalytic residue.

It belongs to the thiolase-like superfamily. Chalcone/stilbene synthases family.

The enzyme catalyses (E)-4-coumaroyl-CoA + 3 malonyl-CoA + 3 H(+) = 2',4,4',6'-tetrahydroxychalcone + 3 CO2 + 4 CoA. Its pathway is secondary metabolite biosynthesis; flavonoid biosynthesis. Its function is as follows. The primary product of this enzyme is 4,2',4',6'-tetrahydroxychalcone (also termed naringenin-chalcone or chalcone) which can under specific conditions spontaneously isomerize into naringenin. This Daucus carota (Wild carrot) protein is Chalcone synthase 1 (CHS1).